Consider the following 511-residue polypeptide: DnaJ homolog 1, mitochondrial (511 aa).

The N-terminal 55 residues, 1–55 (MAFQQGVLSRCSGVFRHHVGHSRHINNILYRHAIAFASIAPRIPKSSFHTSAIRN), are a transit peptide targeting the mitochondrion. Residues 59-127 (FKDPYDTLGL…RQQYDQFGPA (69 aa)) enclose the J domain. Residues 217-297 (SKNVQLRFSA…CHGEGVQVNR (81 aa)) form a CR-type zinc finger. CXXCXGXG motif repeat units lie at residues 230–237 (CSTCSGTG), 247–254 (CSTCHGTG), 269–276 (CPTCNGEG), and 285–292 (CTKCHGEG).

It is found in the mitochondrion. In terms of biological role, plays a role in mitochondrial biogenesis and protein folding. The chain is DnaJ homolog 1, mitochondrial (MDJ1) from Saccharomyces cerevisiae (strain ATCC 204508 / S288c) (Baker's yeast).